The chain runs to 305 residues: UDP-3-O-acyl-N-acetylglucosamine deacetylase (305 aa).

Zn(2+) is bound by residues His-78, His-237, and Asp-241. Catalysis depends on His-264, which acts as the Proton donor.

The protein belongs to the LpxC family. Zn(2+) is required as a cofactor.

It carries out the reaction a UDP-3-O-[(3R)-3-hydroxyacyl]-N-acetyl-alpha-D-glucosamine + H2O = a UDP-3-O-[(3R)-3-hydroxyacyl]-alpha-D-glucosamine + acetate. Its pathway is glycolipid biosynthesis; lipid IV(A) biosynthesis; lipid IV(A) from (3R)-3-hydroxytetradecanoyl-[acyl-carrier-protein] and UDP-N-acetyl-alpha-D-glucosamine: step 2/6. In terms of biological role, catalyzes the hydrolysis of UDP-3-O-myristoyl-N-acetylglucosamine to form UDP-3-O-myristoylglucosamine and acetate, the committed step in lipid A biosynthesis. In Paraburkholderia xenovorans (strain LB400), this protein is UDP-3-O-acyl-N-acetylglucosamine deacetylase.